A 430-amino-acid polypeptide reads, in one-letter code: MIDSLDLVIDTIVAREVLDSRGNPTVEAEVLLEGGAMGRAIVPSGASTGAHEAHELRDGGDRYMGKGVSQAVTHIEERIAPTLCGLSALDQAAVDAAMLELDGSDNKSSLGANAILAVSMATARAAANGLGLPLYRYLGGPMANLLPVPLMNVINGGAHAANSLDFQEFMLVPHGAPSFREALRMGTEVFHTLKGLLKAKGMSTSVGDEGGFAPDLGNVEAGEILVEAITKAGYKPGEQISLALDVASTEFFENGRYAFDGGNYDSAEMVGQLEQLVEKFPIVSIEDGLAEDDWEGWKLLTERLGGKVQLVGDDLFVTNTKRLQQGIDNSTANSILIKVNQIGSLTETLQAIDLAGRSGYTSVISHRSGETEDTTIADLSVATRAGQIKTGSLSRSERVAKYNQLLRIEDELGSQAVYAGAVGQGPRGNA.

Gln167 provides a ligand contact to (2R)-2-phosphoglycerate. Glu209 (proton donor) is an active-site residue. The Mg(2+) site is built by Asp245, Glu286, and Asp313. (2R)-2-phosphoglycerate contacts are provided by Lys338, Arg367, Ser368, and Lys389. Lys338 (proton acceptor) is an active-site residue.

This sequence belongs to the enolase family. Mg(2+) is required as a cofactor.

The protein resides in the cytoplasm. It is found in the secreted. Its subcellular location is the cell surface. It carries out the reaction (2R)-2-phosphoglycerate = phosphoenolpyruvate + H2O. It functions in the pathway carbohydrate degradation; glycolysis; pyruvate from D-glyceraldehyde 3-phosphate: step 4/5. Functionally, catalyzes the reversible conversion of 2-phosphoglycerate (2-PG) into phosphoenolpyruvate (PEP). It is essential for the degradation of carbohydrates via glycolysis. The polypeptide is Enolase (Parasynechococcus marenigrum (strain WH8102)).